Here is a 142-residue protein sequence, read N- to C-terminus: Small ribosomal subunit protein uS12 (142 aa).

Positions 1 to 44 (MANGKYAARKLKQDRQQRRWSDSEYARRERGLGAKSDPLEGAPQ) are disordered. Residues 11-32 (LKQDRQQRRWSDSEYARRERGL) are compositionally biased toward basic and acidic residues.

The protein belongs to the universal ribosomal protein uS12 family. In terms of assembly, part of the 30S ribosomal subunit.

With S4 and S5 plays an important role in translational accuracy. Located at the interface of the 30S and 50S subunits. The protein is Small ribosomal subunit protein uS12 of Haloquadratum walsbyi (strain DSM 16790 / HBSQ001).